The primary structure comprises 258 residues: MLKLRVIPCLDVKNGRVVKGVNFVSLRDAGDPVEQAAVYDAAGADELTFLDITASHENRDTILDVVSRTAERIFLPLTVGGGVRTTDDMRRLLLAGADKCAMNSAAVARPDLVSEAARKFGSQCVVVAVDARSDGHGSWEVYTHGGRTPTGRNVIDWCREVVERGAGEILLTSMDRDGTGSGFDLDLLCAACTAVRVPIVASGGVGTLEHFVEGARAGATGLLAASVFHFGQFTIPQVKQALADAGLPVRHTPAHPVP.

Active-site residues include Asp-11 and Asp-130.

This sequence belongs to the HisA/HisF family. Heterodimer of HisH and HisF.

Its subcellular location is the cytoplasm. It catalyses the reaction 5-[(5-phospho-1-deoxy-D-ribulos-1-ylimino)methylamino]-1-(5-phospho-beta-D-ribosyl)imidazole-4-carboxamide + L-glutamine = D-erythro-1-(imidazol-4-yl)glycerol 3-phosphate + 5-amino-1-(5-phospho-beta-D-ribosyl)imidazole-4-carboxamide + L-glutamate + H(+). It functions in the pathway amino-acid biosynthesis; L-histidine biosynthesis; L-histidine from 5-phospho-alpha-D-ribose 1-diphosphate: step 5/9. Its function is as follows. IGPS catalyzes the conversion of PRFAR and glutamine to IGP, AICAR and glutamate. The HisF subunit catalyzes the cyclization activity that produces IGP and AICAR from PRFAR using the ammonia provided by the HisH subunit. The sequence is that of Imidazole glycerol phosphate synthase subunit HisF from Gluconacetobacter diazotrophicus (strain ATCC 49037 / DSM 5601 / CCUG 37298 / CIP 103539 / LMG 7603 / PAl5).